The following is a 201-amino-acid chain: Potassium-transporting ATPase KdpC subunit (201 aa).

A helical membrane pass occupies residues 10 to 30 (VLLVALTAVTGLAYPLAVTGI).

This sequence belongs to the KdpC family. In terms of assembly, the system is composed of three essential subunits: KdpA, KdpB and KdpC.

It localises to the cell inner membrane. Part of the high-affinity ATP-driven potassium transport (or Kdp) system, which catalyzes the hydrolysis of ATP coupled with the electrogenic transport of potassium into the cytoplasm. This subunit acts as a catalytic chaperone that increases the ATP-binding affinity of the ATP-hydrolyzing subunit KdpB by the formation of a transient KdpB/KdpC/ATP ternary complex. The polypeptide is Potassium-transporting ATPase KdpC subunit (Methylorubrum extorquens (strain PA1) (Methylobacterium extorquens)).